Consider the following 539-residue polypeptide: Chaperonin GroEL 1 (539 aa).

ATP-binding positions include 29 to 32 (TLGP), 86 to 90 (DGTTT), Gly-413, 478 to 480 (NAA), and Asp-494.

Belongs to the chaperonin (HSP60) family. In terms of assembly, forms a cylinder of 14 subunits composed of two heptameric rings stacked back-to-back. Interacts with the co-chaperonin GroES.

It localises to the cytoplasm. The enzyme catalyses ATP + H2O + a folded polypeptide = ADP + phosphate + an unfolded polypeptide.. Its function is as follows. Together with its co-chaperonin GroES, plays an essential role in assisting protein folding. The GroEL-GroES system forms a nano-cage that allows encapsulation of the non-native substrate proteins and provides a physical environment optimized to promote and accelerate protein folding. The sequence is that of Chaperonin GroEL 1 from Corynebacterium diphtheriae (strain ATCC 700971 / NCTC 13129 / Biotype gravis).